The primary structure comprises 263 residues: Tryptophan synthase alpha chain (263 aa).

Catalysis depends on proton acceptor residues Glu49 and Asp60.

The protein belongs to the TrpA family. As to quaternary structure, tetramer of two alpha and two beta chains.

It carries out the reaction (1S,2R)-1-C-(indol-3-yl)glycerol 3-phosphate + L-serine = D-glyceraldehyde 3-phosphate + L-tryptophan + H2O. The protein operates within amino-acid biosynthesis; L-tryptophan biosynthesis; L-tryptophan from chorismate: step 5/5. The alpha subunit is responsible for the aldol cleavage of indoleglycerol phosphate to indole and glyceraldehyde 3-phosphate. This chain is Tryptophan synthase alpha chain, found in Cereibacter sphaeroides (strain KD131 / KCTC 12085) (Rhodobacter sphaeroides).